A 177-amino-acid chain; its full sequence is CCHC-type zinc finger nucleic acid binding protein (177 aa).

N-acetylserine is present on S2. The CCHC-type 1 zinc finger occupies 4 to 21 (NECFKCGRSGHWARECPT). K8 carries the N6-acetyllysine modification. 2 positions are modified to omega-N-methylarginine; by PRMT1: R25 and R27. Positions 25–38 (RGRGMRSRGRGGFT) are RNA-binding Arg/Gly-rich region (RGG-box). An omega-N-methylarginine mark is found at R32 and R34. At S49 the chain carries Phosphoserine. 6 CCHC-type zinc fingers span residues 52 to 69 (DICY…DCDL), 72 to 89 (DACY…DCKE), 96 to 113 (QCCY…DCDH), 117 to 134 (QKCY…DCTK), 135 to 152 (VKCY…NCSK), and 156 to 173 (VNCY…ECTI). A73, R79, and G80 each carry omega-N-methylarginine.

Associates with the 40S ribosomal subunit, the 80S ribosome and with polysomes. Arginine methylation by PRMT1 in the Arg/Gly-rich region impedes RNA binding. As to expression, expressed in the liver, kidney, spleen, testis, lung, muscle and adrenal glands.

The protein resides in the nucleus. It is found in the cytoplasm. It localises to the endoplasmic reticulum. Its function is as follows. Single-stranded DNA-binding protein that preferentially binds to the sterol regulatory element (SRE) sequence 5'-GTGCGGTG-3', and thereby mediates transcriptional repression. Has a role as transactivator of the Myc promoter. Binds single-stranded RNA in a sequence-specific manner. Binds G-rich elements in target mRNA coding sequences. Prevents G-quadruplex structure formation in vitro, suggesting a role in supporting translation by resolving stable structures on mRNAs. Functionally, binds to RNA. This chain is CCHC-type zinc finger nucleic acid binding protein, found in Homo sapiens (Human).